Reading from the N-terminus, the 307-residue chain is 3-ketodihydrosphingosine reductase TSC10 (307 aa).

Residue Leu-11 coordinates NADP(+). 3 residues coordinate NADPH: Gly-14, Ser-16, and Gly-18. Positions 14–18 (GGSQG) match the GXSXG motif. Leu-19 is a binding site for NADP(+). NADPH contacts are provided by Arg-40, Lys-44, and Leu-74. Catalysis depends on Ser-147, which acts as the Proton donor. Residues Tyr-161, Lys-165, and Ser-194 each contribute to the NADP(+) site. Tyr-161 functions as the Proton acceptor in the catalytic mechanism. Lys-165 acts as the Lowers pKa of active site Tyr in catalysis. Residues 261 to 281 (YFLWPLGWLLGALVNLLVVPI) form a helical membrane-spanning segment.

It belongs to the short-chain dehydrogenases/reductases (SDR) family.

The protein resides in the endoplasmic reticulum membrane. The catalysed reaction is sphinganine + NADP(+) = 3-oxosphinganine + NADPH + H(+). It participates in lipid metabolism; sphingolipid metabolism. Its function is as follows. Catalyzes the reduction of 3'-oxosphinganine (3-ketodihydrosphingosine/KDS) to sphinganine (dihydrosphingosine/DHS), the second step of de novo sphingolipid biosynthesis. The chain is 3-ketodihydrosphingosine reductase TSC10 (TSC10) from Eremothecium gossypii (strain ATCC 10895 / CBS 109.51 / FGSC 9923 / NRRL Y-1056) (Yeast).